The following is a 176-amino-acid chain: Envelope protein 167 (176 aa).

A topological domain (intravirion) is located at residue Met1. The chain crosses the membrane as a helical span at residues 2 to 22 (YLVLLIAIILFITIILVIFLI). At 23 to 176 (SGLFYPEQNP…AVMAIPRKVL (154 aa)) the chain is on the virion surface side.

The protein belongs to the asfivirus envelope protein p22 family.

The protein resides in the virion membrane. It localises to the host cell membrane. The polypeptide is Envelope protein 167 (African swine fever virus (isolate Warthog/Namibia/Wart80/1980) (ASFV)).